The chain runs to 510 residues: Protein phosphatase EYA3 (510 aa).

Disordered stretches follow at residues 1 to 32 (MQEPREQTLSQVNNPDASDEKPETSSLASNLS) and 175 to 233 (YQTE…DASS). Polar residues predominate over residues 7–16 (QTLSQVNNPD). Low complexity predominate over residues 192–203 (LPSDSSASPPLS). A phosphoserine mark is found at S199 and S203. D246 (nucleophile) is an active-site residue. Mg(2+) contacts are provided by D246 and D248. The active-site Proton donor is the D248. S375 and S409 each carry phosphoserine. D474 is a binding site for Mg(2+).

Belongs to the HAD-like hydrolase superfamily. EYA family. In terms of assembly, interacts with SIX1 and DACH1, and probably SIX2, SIX4 and SIX5. The cofactor is Mg(2+). Post-translationally, ser-203 phosphorylation is required for localization at sites of DNA damage and directing interaction with H2AX. As to expression, expressed in branchial arches, CNS and developing eye.

The protein resides in the cytoplasm. The protein localises to the nucleus. The catalysed reaction is O-phospho-L-tyrosyl-[protein] + H2O = L-tyrosyl-[protein] + phosphate. In terms of biological role, tyrosine phosphatase that specifically dephosphorylates 'Tyr-142' of histone H2AX (H2AXY142ph). 'Tyr-142' phosphorylation of histone H2AX plays a central role in DNA repair and acts as a mark that distinguishes between apoptotic and repair responses to genotoxic stress. Promotes efficient DNA repair by dephosphorylating H2AX, promoting the recruitment of DNA repair complexes containing MDC1. Its function as histone phosphatase probably explains its role in transcription regulation during organogenesis. The phosphatase activity has been shown in vitro. Coactivates SIX1. Seems to coactivate SIX2, SIX4 and SIX5. The repression of precursor cell proliferation in myoblasts by SIX1 is switched to activation through recruitment of EYA3 to the SIX1-DACH1 complex and seems to be dependent on EYA3 phosphatase activity. May be involved in development of the eye. May play a role in mediating the induction and differentiation of cranial placodes. The protein is Protein phosphatase EYA3 (Eya3) of Mus musculus (Mouse).